Reading from the N-terminus, the 250-residue chain is 5-oxoprolinase subunit A (250 aa).

This sequence belongs to the LamB/PxpA family. In terms of assembly, forms a complex composed of PxpA, PxpB and PxpC.

The catalysed reaction is 5-oxo-L-proline + ATP + 2 H2O = L-glutamate + ADP + phosphate + H(+). In terms of biological role, catalyzes the cleavage of 5-oxoproline to form L-glutamate coupled to the hydrolysis of ATP to ADP and inorganic phosphate. This is 5-oxoprolinase subunit A from Nocardia farcinica (strain IFM 10152).